A 204-amino-acid polypeptide reads, in one-letter code: Glycerol-3-phosphate acyltransferase (204 aa).

5 consecutive transmembrane segments (helical) span residues 8-28, 53-73, 81-101, 116-136, and 155-175; these read ILIF…CYIF, VPAA…VVIA, FITA…IFFG, FGFS…VAII, and VIFT…IIIL.

This sequence belongs to the PlsY family. In terms of assembly, probably interacts with PlsX.

The protein resides in the cell inner membrane. It catalyses the reaction an acyl phosphate + sn-glycerol 3-phosphate = a 1-acyl-sn-glycero-3-phosphate + phosphate. It functions in the pathway lipid metabolism; phospholipid metabolism. Its function is as follows. Catalyzes the transfer of an acyl group from acyl-phosphate (acyl-PO(4)) to glycerol-3-phosphate (G3P) to form lysophosphatidic acid (LPA). This enzyme utilizes acyl-phosphate as fatty acyl donor, but not acyl-CoA or acyl-ACP. This chain is Glycerol-3-phosphate acyltransferase, found in Francisella tularensis subsp. tularensis (strain FSC 198).